The chain runs to 134 residues: Putative toxin MJ0605 (134 aa).

The protein belongs to the UPF0332 family.

Putative toxin component of a putative type VII toxin-antitoxin (TA) system. Its cognate antitoxin might be MJ0604. The chain is Putative toxin MJ0605 from Methanocaldococcus jannaschii (strain ATCC 43067 / DSM 2661 / JAL-1 / JCM 10045 / NBRC 100440) (Methanococcus jannaschii).